We begin with the raw amino-acid sequence, 411 residues long: Serpin A3-5 (411 aa).

Positions 1 to 24 (MRAERTSFLLALGLLMAGIRSVHC) are cleaved as a signal peptide. Residues N100, N180, N230, N264, and N318 are each glycosylated (N-linked (GlcNAc...) asparagine).

Belongs to the serpin family. In terms of assembly, homodimer.

It is found in the cytoplasmic vesicle. The protein localises to the secretory vesicle. Its subcellular location is the chromaffin granule. It localises to the secreted. Serine protease inhibitor. The polypeptide is Serpin A3-5 (Bos taurus (Bovine)).